The following is an 831-amino-acid chain: Multiphosphoryl transfer protein (831 aa).

In terms of domain architecture, HPr spans 1–90 (MLTIQFLCPL…EYIQVRFIDS (90 aa)). The active-site Pros-phosphohistidine intermediate; for HPr activity is the His15. The residue at position 15 (His15) is a Phosphohistidine; by EI. The tract at residues 119–650 (GNVLASGVGV…AVKSQLRQLD (532 aa)) is PTS EI. Catalysis depends on His298, which acts as the Tele-phosphohistidine intermediate; for PTS EI activity. His298 is subject to Phosphohistidine; by autocatalysis. Arg405 and Arg441 together coordinate phosphoenolpyruvate. Residues Glu540 and Asp564 each coordinate Mg(2+). Phosphoenolpyruvate contacts are provided by residues 563–564 (ND) and Arg574. The Proton donor; for EI activity role is filled by Cys611. One can recognise a PTS EIIA type-2 domain in the interval 685 to 828 (PLLALENIFV…QSILTLLETE (144 aa)). The active-site Tele-phosphohistidine intermediate; for PTS EIIA activity is the His747. At His747 the chain carries Phosphohistidine; by HPr.

It belongs to the PEP-utilizing enzyme family. The cofactor is Mg(2+).

The protein resides in the cytoplasm. It catalyses the reaction L-histidyl-[protein] + phosphoenolpyruvate = N(pros)-phospho-L-histidyl-[protein] + pyruvate. The enzyme catalyses D-fructose(out) + N(pros)-phospho-L-histidyl-[protein] = D-fructose 1-phosphate(in) + L-histidyl-[protein]. Its function is as follows. Multifunctional protein that includes general (non sugar-specific) and sugar-specific components of the phosphoenolpyruvate-dependent sugar phosphotransferase system (sugar PTS). This major carbohydrate active transport system catalyzes the phosphorylation of incoming sugar substrates concomitantly with their translocation across the cell membrane. The enzyme II FryABC PTS system is involved in fructose transport. This is Multiphosphoryl transfer protein (fryA) from Escherichia coli O157:H7.